Here is a 435-residue protein sequence, read N- to C-terminus: Glucan 1,3-beta-glucosidase (435 aa).

The N-terminal stretch at 1–30 (MLFPVLHLPKAMKFSSFSLIASSLLSLVAA) is a signal peptide. Glutamate 222 serves as the catalytic Proton donor. Cystine bridges form between cysteine 306-cysteine 432 and cysteine 331-cysteine 357. The active-site Nucleophile is glutamate 323.

Belongs to the glycosyl hydrolase 5 (cellulase A) family.

The protein resides in the secreted. It carries out the reaction Successive hydrolysis of beta-D-glucose units from the non-reducing ends of (1-&gt;3)-beta-D-glucans, releasing alpha-glucose.. Beta-glucanases participate in the metabolism of beta-glucan, the main structural component of the cell wall. It could also function biosynthetically as a transglycosylase. This Pichia angusta (Yeast) protein is Glucan 1,3-beta-glucosidase.